The primary structure comprises 300 residues: N-acetylmuramic acid 6-phosphate etherase 1 (300 aa).

The SIS domain occupies alanine 59–asparagine 222. The Proton donor role is filled by glutamate 87. Glutamate 118 is an active-site residue.

This sequence belongs to the GCKR-like family. MurNAc-6-P etherase subfamily. Homodimer.

It catalyses the reaction N-acetyl-D-muramate 6-phosphate + H2O = N-acetyl-D-glucosamine 6-phosphate + (R)-lactate. It functions in the pathway amino-sugar metabolism; N-acetylmuramate degradation. Functionally, specifically catalyzes the cleavage of the D-lactyl ether substituent of MurNAc 6-phosphate, producing GlcNAc 6-phosphate and D-lactate. The polypeptide is N-acetylmuramic acid 6-phosphate etherase 1 (Enterococcus faecalis (strain ATCC 700802 / V583)).